The following is a 474-amino-acid chain: 3-isopropylmalate dehydratase large subunit (474 aa).

Positions 353, 414, and 417 each coordinate [4Fe-4S] cluster.

The protein belongs to the aconitase/IPM isomerase family. LeuC type 1 subfamily. Heterodimer of LeuC and LeuD. Requires [4Fe-4S] cluster as cofactor.

The catalysed reaction is (2R,3S)-3-isopropylmalate = (2S)-2-isopropylmalate. It functions in the pathway amino-acid biosynthesis; L-leucine biosynthesis; L-leucine from 3-methyl-2-oxobutanoate: step 2/4. Catalyzes the isomerization between 2-isopropylmalate and 3-isopropylmalate, via the formation of 2-isopropylmaleate. The sequence is that of 3-isopropylmalate dehydratase large subunit from Teredinibacter turnerae (strain ATCC 39867 / T7901).